A 226-amino-acid chain; its full sequence is Isoprenyl transferase (226 aa).

Residue Asp-12 is part of the active site. Position 12 (Asp-12) interacts with Mg(2+). Residues 13–16 (GNAR), Trp-17, Lys-25, His-29, and 57–59 (SSE) each bind substrate. The Proton acceptor role is filled by Asn-60. Substrate-binding positions include Trp-61, Arg-63, Arg-174, and 180–182 (RIS). Glu-193 contributes to the Mg(2+) binding site.

It belongs to the UPP synthase family. In terms of assembly, homodimer. It depends on Mg(2+) as a cofactor.

Functionally, catalyzes the condensation of isopentenyl diphosphate (IPP) with allylic pyrophosphates generating different type of terpenoids. The sequence is that of Isoprenyl transferase from Rickettsia typhi (strain ATCC VR-144 / Wilmington).